The sequence spans 132 residues: Fatty acid-binding protein (132 aa).

Residues R107 and 127 to 129 each bind (5Z,8Z,11Z,14Z)-eicosatetraenoate; that span reads RNY. (9Z)-octadecenoate is bound by residues R107 and 127-129; that span reads RNY.

This sequence belongs to the calycin superfamily. Fatty-acid binding protein (FABP) family.

It is found in the cytoplasm. Functionally, may play a role in the transport of fatty acids. Binds to various fatty acids but not retinoids. The sequence is that of Fatty acid-binding protein from Schistosoma japonicum (Blood fluke).